The chain runs to 345 residues: N-acetyl-gamma-glutamyl-phosphate reductase (345 aa).

The active site involves Cys-149.

It belongs to the NAGSA dehydrogenase family. Type 1 subfamily.

The protein localises to the cytoplasm. The catalysed reaction is N-acetyl-L-glutamate 5-semialdehyde + phosphate + NADP(+) = N-acetyl-L-glutamyl 5-phosphate + NADPH + H(+). Its pathway is amino-acid biosynthesis; L-arginine biosynthesis; N(2)-acetyl-L-ornithine from L-glutamate: step 3/4. Catalyzes the NADPH-dependent reduction of N-acetyl-5-glutamyl phosphate to yield N-acetyl-L-glutamate 5-semialdehyde. This chain is N-acetyl-gamma-glutamyl-phosphate reductase, found in Marinobacter nauticus (strain ATCC 700491 / DSM 11845 / VT8) (Marinobacter aquaeolei).